The sequence spans 61 residues: Large ribosomal subunit protein uL30 (61 aa).

It belongs to the universal ribosomal protein uL30 family. In terms of assembly, part of the 50S ribosomal subunit.

The chain is Large ribosomal subunit protein uL30 from Francisella philomiragia subsp. philomiragia (strain ATCC 25017 / CCUG 19701 / FSC 153 / O#319-036).